Here is a 120-residue protein sequence, read N- to C-terminus: Ribosome-binding factor A (120 aa).

This sequence belongs to the RbfA family. Monomer. Binds 30S ribosomal subunits, but not 50S ribosomal subunits or 70S ribosomes.

It localises to the cytoplasm. Functionally, one of several proteins that assist in the late maturation steps of the functional core of the 30S ribosomal subunit. Associates with free 30S ribosomal subunits (but not with 30S subunits that are part of 70S ribosomes or polysomes). Required for efficient processing of 16S rRNA. May interact with the 5'-terminal helix region of 16S rRNA. The chain is Ribosome-binding factor A from Clostridium botulinum (strain Loch Maree / Type A3).